A 187-amino-acid polypeptide reads, in one-letter code: UPF0301 protein GOX1459 (187 aa).

Belongs to the UPF0301 (AlgH) family.

The sequence is that of UPF0301 protein GOX1459 from Gluconobacter oxydans (strain 621H) (Gluconobacter suboxydans).